The chain runs to 294 residues: Acetylglutamate kinase (294 aa).

Substrate is bound by residues G63 to G64, R85, and N188.

This sequence belongs to the acetylglutamate kinase family. ArgB subfamily.

The protein localises to the cytoplasm. The enzyme catalyses N-acetyl-L-glutamate + ATP = N-acetyl-L-glutamyl 5-phosphate + ADP. The protein operates within amino-acid biosynthesis; L-arginine biosynthesis; N(2)-acetyl-L-ornithine from L-glutamate: step 2/4. Its function is as follows. Catalyzes the ATP-dependent phosphorylation of N-acetyl-L-glutamate. This Methanococcus maripaludis (strain C7 / ATCC BAA-1331) protein is Acetylglutamate kinase.